The primary structure comprises 437 residues: ATP-dependent protease ATPase subunit HslU (437 aa).

ATP is bound by residues Val18, 60-65, Asp249, Glu315, and Arg387; that span reads GVGKTE.

It belongs to the ClpX chaperone family. HslU subfamily. In terms of assembly, a double ring-shaped homohexamer of HslV is capped on each side by a ring-shaped HslU homohexamer. The assembly of the HslU/HslV complex is dependent on binding of ATP.

It localises to the cytoplasm. Functionally, ATPase subunit of a proteasome-like degradation complex; this subunit has chaperone activity. The binding of ATP and its subsequent hydrolysis by HslU are essential for unfolding of protein substrates subsequently hydrolyzed by HslV. HslU recognizes the N-terminal part of its protein substrates and unfolds these before they are guided to HslV for hydrolysis. This Rhodospirillum centenum (strain ATCC 51521 / SW) protein is ATP-dependent protease ATPase subunit HslU.